The chain runs to 190 residues: Capsid protein (190 aa).

Position 1 is an N-acetylmethionine; by host (methionine 1).

Belongs to the tymoviruses capsid protein family.

The protein resides in the virion. In terms of biological role, self-assembles to form a T=3 icosahedral capsid composed of 180 copies of the capsid protein. The capsid encapsulates the single-stranded RNA genome. This is Capsid protein from Atropa belladonna (Belladonna).